Reading from the N-terminus, the 398-residue chain is Acetate kinase (398 aa).

Residue Asn7 participates in Mg(2+) binding. Lys14 is an ATP binding site. Arg91 contributes to the substrate binding site. Residue Asp148 is the Proton donor/acceptor of the active site. Residues 208–212, 283–285, and 331–335 contribute to the ATP site; these read HLGNG, DFR, and GIGEH. Glu386 serves as a coordination point for Mg(2+).

It belongs to the acetokinase family. Homodimer. Requires Mg(2+) as cofactor. The cofactor is Mn(2+).

It is found in the cytoplasm. It carries out the reaction acetate + ATP = acetyl phosphate + ADP. It functions in the pathway metabolic intermediate biosynthesis; acetyl-CoA biosynthesis; acetyl-CoA from acetate: step 1/2. Catalyzes the formation of acetyl phosphate from acetate and ATP. Can also catalyze the reverse reaction. In Clostridium botulinum (strain Eklund 17B / Type B), this protein is Acetate kinase.